The chain runs to 283 residues: Glutamate racemase (283 aa).

Residues 28-29 (DS) and 60-61 (YG) each bind substrate. Cys-92 functions as the Proton donor/acceptor in the catalytic mechanism. 93 to 94 (NT) is a binding site for substrate. Residue Cys-204 is the Proton donor/acceptor of the active site. 205-206 (TH) is a substrate binding site.

Belongs to the aspartate/glutamate racemases family.

The catalysed reaction is L-glutamate = D-glutamate. It participates in cell wall biogenesis; peptidoglycan biosynthesis. Provides the (R)-glutamate required for cell wall biosynthesis. The chain is Glutamate racemase from Salmonella enteritidis PT4 (strain P125109).